We begin with the raw amino-acid sequence, 86 residues long: MKASMFLALAGLALLFVVCYASESEEKEFSNELLSSVLAVDDNSKGEERECLGFGKGCNPSNDQCCKSSNLVCSRKHRRCKYEIGK.

The N-terminal stretch at 1–21 (MKASMFLALAGLALLFVVCYA) is a signal peptide. A propeptide spanning residues 22–49 (SESEEKEFSNELLSSVLAVDDNSKGEER) is cleaved from the precursor. 3 disulfide bridges follow: Cys51-Cys66, Cys58-Cys73, and Cys65-Cys80. At Ile84 the chain carries Isoleucine amide.

It belongs to the neurotoxin 10 (Hwtx-1) family. 22 (Htx-4) subfamily. In terms of assembly, monomer. As to expression, expressed by the venom gland.

It localises to the secreted. Neurotoxin. Selectively blocks neuronal tetrodotoxin-sensitive voltage-gated sodium channels (Nav). Does not affect tetrodotoxin-resistant voltage-gated sodium channels or calcium channels. The sequence is that of Mu-theraphotoxin-Hhn1c from Cyriopagopus hainanus (Chinese bird spider).